Reading from the N-terminus, the 391-residue chain is UPF0229 protein CA_C0580 (391 aa).

2 disordered regions span residues 1-20 (MAIFRDYSINPTEHDRTIGD) and 75-109 (VGSGTGNEKKGDIIGKEQMGNGSKGKGKGAGNSEG). Gly residues predominate over residues 96 to 106 (GSKGKGKGAGN).

Belongs to the UPF0229 family.

This is UPF0229 protein CA_C0580 from Clostridium acetobutylicum (strain ATCC 824 / DSM 792 / JCM 1419 / IAM 19013 / LMG 5710 / NBRC 13948 / NRRL B-527 / VKM B-1787 / 2291 / W).